We begin with the raw amino-acid sequence, 1627 residues long: MHQTKKTALSKSTWILILTATASLATGLTVVGHFTSTTTTLKRQQFSYTRPDEVALRHTNAINPRLTPWTYRNTSFSSLPLTGENPGAWALVRDNSAKGITAGSGSQQTTYDPTRTEAALTASTTFALRRYDLAGRALYDLDFSKLNPQTPTRDQTGQITFNPFGGFGLSGAAPQQWNEVKNKVPVEVAQDPSNPYRFAVLLVPRSVVYYEQLQRGLGLPQQRTESGQNTSTTGAMFGLKVKNAEADTAKSNEKLQGAEATGSSTTSGSGQSTQRGGSSGDTKVKALKIEVKKKSDSEDNGQLQLEKNDLANAPIKRSEESGQSVQLKADDFGTALSSSGSGGNSNPGSPTPWRPWLATEQIHKDLPKWSASILILYDAPYARNRTAIDRVDHLDPKAMTANYPPSWRTPKWNHHGLWDWKARDVLLQTTGFFNPRRHPEWFDGGQTVADNEKTGFDVDNSENTKQGFQKEADSDKSAPIALPFEAYFANIGNLTWFGQALLVFGGNGHVTKSAHTAPLSIGVFRVRYNATGTSATVTGWPYALLFSGMVNKQTDGLKDLPFNNNRWFEYVPRMAVAGAKFVGRELVLAGTITMGDTATVPRLLYDELESNLNLVAQGQGLLREDLQLFTPYGWANRPDLPIGAWSSSSSSSHNAPYYFHNNPDWQDRPIQNVVDAFIKPWEDKNGKDDAKYIYPYRYSGMWAWQVYNWSNKLTDQPLSADFVNENAYQPNSLFAAILNPELLAALPDKVKYGKENEFAANEYERFNQKLTVAPTQGTNWSHFSPTLSRFSTGFNLVGSVLDQVLDYVPWIGNGYRYGNNHRGVDDITAPQTSAGSSSGISTNTSGSRSFLPTFSNIGVGLKANVQATLGGSQTMITGGSPRRTLDQANLQLWTGAGWRNDKASSGQSDENHTKFTSATGMDQQGQSGTSAGNPDSLKQDNISKSGDSLTTQDGNAIDQQEATNYTNLPPNLTPTADWPNALSFTNKNNAQRAQLFLRGLLGSIPVLVNRSGSDSNKFQATDQKWSYTDLHSDQTKLNLPAYGEVNGLLNPALVETYFGNTRAGGSGSNTTSSPGIGFKIPEQNNDSKATLITPGLAWTPQDVGNLVVSGTTVSFQLGGWLVTFTDFVKPRAGYLGLQLTGLDASDATQRALIWAPRPWAAFRGSWVNRLGRVESVWDLKGVWADQAQSDSQGSTTTATRNALPEHPNALAFQVSVVEASAYKPNTSSGQTQSTNSSPYLHLVKPKKVTQSDKLDDDLKNLLDPNQVRTKLRQSFGTDHSTQPQPQSLKTTTPVFGTSSGNLSSVLSGGGAGGGSSGSGQSGVDLSPVEKVSGWLVGQLPSTSDGNTSSTNNLAPNTNTGNDVVGVGRLSESNAAKMNDDVDGIVRTPLAELLDGEGQTADTGPQSVKFKSPDQIDFNRLFTHPVTDLFDPVTMLVYDQYIPLFIDIPASVNPKMVRLKVLSFDTNEQSLGLRLEFFKPDQDTQPNNNVQVNPNNGDFLPLLTASSQGPQTLFSPFNQWPDYVLPLAITVPIVVIVLSVTLGLAIGIPMHKNKQALKAGFALSNQKVDVLTKAVGSVFKEIINRTGISQAPKRLKQTSAAKPGAPRPPVPPKPGAPKPPVQPPKKPA.

Positions methionine 1–threonine 59 are cleaved as a signal peptide. Disordered regions lie at residues leucine 219–glycine 238, asparagine 252–proline 355, tryptophan 898–aspartate 953, and serine 1274–aspartate 1362. Polar residues predominate over residues threonine 224–glycine 234. Positions threonine 261–glycine 276 are enriched in low complexity. A compositionally biased stretch (basic and acidic residues) spans threonine 282–serine 297. Polar residues-rich tracts occupy residues alanine 903 to asparagine 933, glutamine 939 to aspartate 953, and serine 1274 to threonine 1297. The span at serine 1307–glutamine 1320 shows a compositional bias: gly residues. Low complexity predominate over residues serine 1341 to asparagine 1352. The tract at residues glycine 1403–isoleucine 1415 is cytadherence epitope. The chain crosses the membrane as a helical span at residues alanine 1527 to isoleucine 1547. Positions glutamine 1589–alanine 1627 are disordered. Positions alanine 1604–alanine 1627 are enriched in pro residues.

Belongs to the adhesin P1 family.

It localises to the cell membrane. The protein resides in the cell projection. Its subcellular location is the attachment organelle. The protein localises to the cell surface. Its function is as follows. The protein is the major adhesin mediating the attachment of this mycoplasma to respiratory epithelium. This is Adhesin P1 (mgpA) from Mycoplasma pneumoniae (strain ATCC 29342 / M129 / Subtype 1) (Mycoplasmoides pneumoniae).